Here is a 492-residue protein sequence, read N- to C-terminus: Fascin-2 (492 aa).

The protein belongs to the fascin family. In terms of tissue distribution, localized specifically in the outer and inner segments of the photoreceptor cells in the retina.

The protein localises to the cytoplasm. Its subcellular location is the cytoskeleton. It localises to the cell projection. It is found in the stereocilium. Functionally, acts as an actin bundling protein. May play a pivotal role in photoreceptor cell-specific events, such as disk morphogenesis. The polypeptide is Fascin-2 (FSCN2) (Homo sapiens (Human)).